Here is a 388-residue protein sequence, read N- to C-terminus: Succinate--CoA ligase [ADP-forming] subunit beta (388 aa).

An ATP-grasp domain is found at 9-244; that stretch reads KEIFARYGLP…PTQESELEVK (236 aa). ATP is bound by residues lysine 46, 53–55, glutamate 99, threonine 102, and glutamate 107; that span reads GRG. Mg(2+) is bound by residues asparagine 199 and aspartate 213. Substrate is bound by residues asparagine 264 and 321-323; that span reads GIL.

Belongs to the succinate/malate CoA ligase beta subunit family. As to quaternary structure, heterotetramer of two alpha and two beta subunits. The cofactor is Mg(2+).

It carries out the reaction succinate + ATP + CoA = succinyl-CoA + ADP + phosphate. It catalyses the reaction GTP + succinate + CoA = succinyl-CoA + GDP + phosphate. It functions in the pathway carbohydrate metabolism; tricarboxylic acid cycle; succinate from succinyl-CoA (ligase route): step 1/1. Its function is as follows. Succinyl-CoA synthetase functions in the citric acid cycle (TCA), coupling the hydrolysis of succinyl-CoA to the synthesis of either ATP or GTP and thus represents the only step of substrate-level phosphorylation in the TCA. The beta subunit provides nucleotide specificity of the enzyme and binds the substrate succinate, while the binding sites for coenzyme A and phosphate are found in the alpha subunit. The protein is Succinate--CoA ligase [ADP-forming] subunit beta of Persephonella marina (strain DSM 14350 / EX-H1).